We begin with the raw amino-acid sequence, 159 residues long: NAD(P)H-quinone oxidoreductase subunit J, chloroplastic (159 aa).

The protein belongs to the complex I 30 kDa subunit family. NDH is composed of at least 16 different subunits, 5 of which are encoded in the nucleus.

It is found in the plastid. The protein localises to the chloroplast thylakoid membrane. It carries out the reaction a plastoquinone + NADH + (n+1) H(+)(in) = a plastoquinol + NAD(+) + n H(+)(out). The enzyme catalyses a plastoquinone + NADPH + (n+1) H(+)(in) = a plastoquinol + NADP(+) + n H(+)(out). Its function is as follows. NDH shuttles electrons from NAD(P)H:plastoquinone, via FMN and iron-sulfur (Fe-S) centers, to quinones in the photosynthetic chain and possibly in a chloroplast respiratory chain. The immediate electron acceptor for the enzyme in this species is believed to be plastoquinone. Couples the redox reaction to proton translocation, and thus conserves the redox energy in a proton gradient. This is NAD(P)H-quinone oxidoreductase subunit J, chloroplastic from Triticum aestivum (Wheat).